We begin with the raw amino-acid sequence, 185 residues long: Threonylcarbamoyl-AMP synthase (185 aa).

In terms of domain architecture, YrdC-like spans 4-185 (SFRAQCAARV…LVTGQVIRPA (182 aa)).

The protein belongs to the SUA5 family. TsaC subfamily.

Its subcellular location is the cytoplasm. It catalyses the reaction L-threonine + hydrogencarbonate + ATP = L-threonylcarbamoyladenylate + diphosphate + H2O. Required for the formation of a threonylcarbamoyl group on adenosine at position 37 (t(6)A37) in tRNAs that read codons beginning with adenine. Catalyzes the conversion of L-threonine, HCO(3)(-)/CO(2) and ATP to give threonylcarbamoyl-AMP (TC-AMP) as the acyladenylate intermediate, with the release of diphosphate. This chain is Threonylcarbamoyl-AMP synthase, found in Pseudomonas aeruginosa (strain UCBPP-PA14).